The sequence spans 99 residues: Acylphosphatase (99 aa).

Residues 5–97 form the Acylphosphatase-like domain; it reads VRQVTVQGRV…RPGERFSTLP (93 aa). Residues arginine 20 and asparagine 38 contribute to the active site.

It belongs to the acylphosphatase family.

The enzyme catalyses an acyl phosphate + H2O = a carboxylate + phosphate + H(+). The sequence is that of Acylphosphatase (acyP) from Rhodopseudomonas palustris (strain BisB18).